The following is a 259-amino-acid chain: GDP-perosamine N-formyltransferase (259 aa).

(6S)-5,6,7,8-tetrahydrofolate-binding positions include 89-91 (SLI) and 139-143 (DENFD).

Belongs to the Fmt family. Homodimer.

It catalyses the reaction GDP-alpha-D-perosamine + (6R)-10-formyltetrahydrofolate = GDP-N-formyl-alpha-D-perosamine + (6S)-5,6,7,8-tetrahydrofolate + H(+). It participates in bacterial outer membrane biogenesis; lipopolysaccharide biosynthesis. Its function is as follows. Involved in the lipopolysaccharide (LPS) O-antigen biosynthesis. Catalyzes the transfer of a formyl group to GDP-perosamine, leading to the formation of GDP-N-formylperosamine. Is critical for full bacterial virulence. This chain is GDP-perosamine N-formyltransferase, found in Brucella abortus (strain 2308).